The chain runs to 553 residues: Arginine--tRNA ligase (553 aa).

A 'HIGH' region motif is present at residues 130–140 (ANPTGDLHIGH).

Belongs to the class-I aminoacyl-tRNA synthetase family. In terms of assembly, monomer.

It is found in the cytoplasm. The catalysed reaction is tRNA(Arg) + L-arginine + ATP = L-arginyl-tRNA(Arg) + AMP + diphosphate. The protein is Arginine--tRNA ligase of Staphylococcus aureus (strain USA300 / TCH1516).